The following is a 421-amino-acid chain: Serine--tRNA ligase (421 aa).

Residue 231-233 (TGE) participates in L-serine binding. 262-264 (RRE) lines the ATP pocket. Glu-285 is a binding site for L-serine. 349–352 (EVSS) contacts ATP. Ser-384 provides a ligand contact to L-serine.

It belongs to the class-II aminoacyl-tRNA synthetase family. Type-1 seryl-tRNA synthetase subfamily. In terms of assembly, homodimer. The tRNA molecule binds across the dimer.

Its subcellular location is the cytoplasm. It catalyses the reaction tRNA(Ser) + L-serine + ATP = L-seryl-tRNA(Ser) + AMP + diphosphate + H(+). The catalysed reaction is tRNA(Sec) + L-serine + ATP = L-seryl-tRNA(Sec) + AMP + diphosphate + H(+). It participates in aminoacyl-tRNA biosynthesis; selenocysteinyl-tRNA(Sec) biosynthesis; L-seryl-tRNA(Sec) from L-serine and tRNA(Sec): step 1/1. Functionally, catalyzes the attachment of serine to tRNA(Ser). Is also able to aminoacylate tRNA(Sec) with serine, to form the misacylated tRNA L-seryl-tRNA(Sec), which will be further converted into selenocysteinyl-tRNA(Sec). This chain is Serine--tRNA ligase, found in Methylacidiphilum infernorum (isolate V4) (Methylokorus infernorum (strain V4)).